A 470-amino-acid polypeptide reads, in one-letter code: MTELPDNTRWQLWIVAFGFFMQSLDTTIVNTALPSMAKSLGESPLHMHMVVVSYVLTVAVMLPASGWLADKIGVRNIFFAAIVLFTLGSLFCALSGTLNQLVLARVLQGVGGAMMVPVGRLTVMKIVPRTQYMAAMTFVTLPGQIGPLLGPALGGVLVEYASWHWIFLINIPVGIVGAMATFMLMPNYTIETRRFDLPGFLLLAIGMAVLTLALDGSKSMGISPWTLAGLAAGGAAAILLYLFHAKKNSGALFSLRLFRTPTFSLGLLGSFAGRIGSGMLPFMTPVFLQIGLGFSPFHAGLMMIPMVLGSMGMKRIVVQIVNRFGYRRVLVATTLGLALVSLLFMSVALLGWYYLLPLVLLLQGMVNSARFSSMNTLTLKDLPDTLASSGNSLLSMIMQLSMSIGVTIAGMLLGMFGQQHIGIDSSATHHVFMYTWLCMAVIIALPAIIFARVPNDTQQNMVISRRKRSL.

Residues M1–Q11 are Periplasmic-facing. The chain crosses the membrane as a helical span at residues L12–A32. Residues L33 to H48 are Cytoplasmic-facing. The chain crosses the membrane as a helical span at residues M49–A69. Over D70–N76 the chain is Periplasmic. The helical transmembrane segment at I77 to T97 threads the bilayer. Residues L98–L101 are Cytoplasmic-facing. A helical transmembrane segment spans residues V102–M124. Topologically, residues K125–T137 are periplasmic. Residues F138–V158 traverse the membrane as a helical segment. Over E159–H164 the chain is Cytoplasmic. Residues W165–M185 traverse the membrane as a helical segment. At P186–D196 the chain is on the periplasmic side. The chain crosses the membrane as a helical span at residues L197–S217. The Cytoplasmic portion of the chain corresponds to K218–P224. Residues W225 to A245 traverse the membrane as a helical segment. Over K246–T262 the chain is Periplasmic. Residues F263 to M283 form a helical membrane-spanning segment. The Cytoplasmic segment spans residues T284–P285. A helical transmembrane segment spans residues V286–M306. The Periplasmic portion of the chain corresponds to V307–S341. Residues L342–L362 traverse the membrane as a helical segment. Over Q363 to S395 the chain is Cytoplasmic. The chain crosses the membrane as a helical span at residues M396 to F416. The Periplasmic portion of the chain corresponds to G417–H430. A helical membrane pass occupies residues V431–A451. Over R452–L470 the chain is Cytoplasmic.

This sequence belongs to the major facilitator superfamily. TCR/Tet family.

It is found in the cell inner membrane. The chain is Putative multidrug resistance protein MdtD from Salmonella dublin (strain CT_02021853).